The primary structure comprises 507 residues: ATP synthase subunit alpha, chloroplastic (507 aa).

170–177 is a binding site for ATP; it reads GDRQTGKT.

This sequence belongs to the ATPase alpha/beta chains family. In terms of assembly, F-type ATPases have 2 components, CF(1) - the catalytic core - and CF(0) - the membrane proton channel. CF(1) has five subunits: alpha(3), beta(3), gamma(1), delta(1), epsilon(1). CF(0) has four main subunits: a, b, b' and c.

It is found in the plastid. It localises to the chloroplast thylakoid membrane. The catalysed reaction is ATP + H2O + 4 H(+)(in) = ADP + phosphate + 5 H(+)(out). Functionally, produces ATP from ADP in the presence of a proton gradient across the membrane. The alpha chain is a regulatory subunit. The protein is ATP synthase subunit alpha, chloroplastic of Oenothera glazioviana (Large-flowered evening primrose).